Here is a 423-residue protein sequence, read N- to C-terminus: Serine--tRNA ligase (423 aa).

Residues 1 to 12 show a composition bias toward basic and acidic residues; the sequence is MIDLKALRENPD. A disordered region spans residues 1-26; sequence MIDLKALRENPDVGRASQRSRGEDPE. 230-232 serves as a coordination point for L-serine; the sequence is TSE. ATP-binding positions include 261 to 263 and Val277; that span reads RRE. Glu284 is a binding site for L-serine. An ATP-binding site is contributed by 348–351; that stretch reads ELTS. L-serine is bound at residue Thr383.

It belongs to the class-II aminoacyl-tRNA synthetase family. Type-1 seryl-tRNA synthetase subfamily. In terms of assembly, homodimer. The tRNA molecule binds across the dimer.

It localises to the cytoplasm. The enzyme catalyses tRNA(Ser) + L-serine + ATP = L-seryl-tRNA(Ser) + AMP + diphosphate + H(+). The catalysed reaction is tRNA(Sec) + L-serine + ATP = L-seryl-tRNA(Sec) + AMP + diphosphate + H(+). It participates in aminoacyl-tRNA biosynthesis; selenocysteinyl-tRNA(Sec) biosynthesis; L-seryl-tRNA(Sec) from L-serine and tRNA(Sec): step 1/1. Functionally, catalyzes the attachment of serine to tRNA(Ser). Is also able to aminoacylate tRNA(Sec) with serine, to form the misacylated tRNA L-seryl-tRNA(Sec), which will be further converted into selenocysteinyl-tRNA(Sec). This Beutenbergia cavernae (strain ATCC BAA-8 / DSM 12333 / CCUG 43141 / JCM 11478 / NBRC 16432 / NCIMB 13614 / HKI 0122) protein is Serine--tRNA ligase.